The primary structure comprises 865 residues: DNA mismatch repair protein MutS (865 aa).

605–612 (GPNMAGKS) lines the ATP pocket. The disordered stretch occupies residues 814 to 833 (PEPLEAYKPKGNKQPLSDEE).

It belongs to the DNA mismatch repair MutS family.

In terms of biological role, this protein is involved in the repair of mismatches in DNA. It is possible that it carries out the mismatch recognition step. This protein has a weak ATPase activity. The protein is DNA mismatch repair protein MutS of Halalkalibacterium halodurans (strain ATCC BAA-125 / DSM 18197 / FERM 7344 / JCM 9153 / C-125) (Bacillus halodurans).